A 402-amino-acid polypeptide reads, in one-letter code: Phosphoglycerate kinase (402 aa).

Substrate-binding positions include Asp30–Asn32, Arg46, His70–Arg73, Arg126, and Arg159. ATP-binding positions include Lys210, Glu332, and Gly358–Thr361.

This sequence belongs to the phosphoglycerate kinase family. In terms of assembly, monomer.

The protein localises to the cytoplasm. It carries out the reaction (2R)-3-phosphoglycerate + ATP = (2R)-3-phospho-glyceroyl phosphate + ADP. It functions in the pathway carbohydrate degradation; glycolysis; pyruvate from D-glyceraldehyde 3-phosphate: step 2/5. The chain is Phosphoglycerate kinase from Helicobacter hepaticus (strain ATCC 51449 / 3B1).